A 205-amino-acid polypeptide reads, in one-letter code: Venom allergen 5 (205 aa).

Disulfide bonds link cysteine 4-cysteine 16, cysteine 8-cysteine 104, cysteine 28-cysteine 96, and cysteine 171-cysteine 188. Residues 47–190 enclose the SCP domain; it reads VNEHNRFRQK…MQHHYLICNY (144 aa).

Belongs to the CRISP family. Venom allergen 5-like subfamily. Expressed by the venom gland.

The protein resides in the secreted. The polypeptide is Venom allergen 5 (Polistes fuscatus (Paper wasp)).